Consider the following 418-residue polypeptide: Pyrophosphate--fructose 6-phosphate 1-phosphotransferase (418 aa).

Gly-13 is a binding site for diphosphate. A Mg(2+)-binding site is contributed by Asn-111. Substrate contacts are provided by residues 139-141 (TID), 187-189 (MGR), Glu-244, and 295-298 (YLQR). Catalysis depends on Asp-141, which acts as the Proton acceptor.

It belongs to the phosphofructokinase type A (PFKA) family. PPi-dependent PFK group II subfamily. Clade 'B2' sub-subfamily. In terms of assembly, homodimer. Mg(2+) serves as cofactor.

The protein localises to the cytoplasm. The catalysed reaction is beta-D-fructose 6-phosphate + diphosphate = beta-D-fructose 1,6-bisphosphate + phosphate + H(+). It functions in the pathway carbohydrate degradation; glycolysis; D-glyceraldehyde 3-phosphate and glycerone phosphate from D-glucose: step 3/4. Its activity is regulated as follows. Non-allosteric. In terms of biological role, catalyzes the phosphorylation of D-fructose 6-phosphate, the first committing step of glycolysis. Uses inorganic phosphate (PPi) as phosphoryl donor instead of ATP like common ATP-dependent phosphofructokinases (ATP-PFKs), which renders the reaction reversible, and can thus function both in glycolysis and gluconeogenesis. Consistently, PPi-PFK can replace the enzymes of both the forward (ATP-PFK) and reverse (fructose-bisphosphatase (FBPase)) reactions. This Xanthomonas campestris pv. campestris (strain B100) protein is Pyrophosphate--fructose 6-phosphate 1-phosphotransferase.